We begin with the raw amino-acid sequence, 354 residues long: Histidinol-phosphate aminotransferase (354 aa).

The residue at position 210 (Lys-210) is an N6-(pyridoxal phosphate)lysine.

It belongs to the class-II pyridoxal-phosphate-dependent aminotransferase family. Histidinol-phosphate aminotransferase subfamily. In terms of assembly, homodimer. It depends on pyridoxal 5'-phosphate as a cofactor.

It carries out the reaction L-histidinol phosphate + 2-oxoglutarate = 3-(imidazol-4-yl)-2-oxopropyl phosphate + L-glutamate. It functions in the pathway amino-acid biosynthesis; L-histidine biosynthesis; L-histidine from 5-phospho-alpha-D-ribose 1-diphosphate: step 7/9. This chain is Histidinol-phosphate aminotransferase, found in Clostridium botulinum (strain Langeland / NCTC 10281 / Type F).